Here is a 242-residue protein sequence, read N- to C-terminus: Eukaryotic translation initiation factor 4E type 1B (242 aa).

Residues 1 to 42 (MLAVEVSEAEGGIREWEEEEKEEEAAERTPTGEKSPNSPRTL) form a disordered region. The segment covering 16–25 (WEEEEKEEEA) has biased composition (acidic residues). Over residues 32–41 (GEKSPNSPRT) the composition is skewed to polar residues. The tract at residues 62-65 (HPLQ) is EIF4EBP1/2/3 binding. 81-82 (WQ) is an mRNA binding site. The EIF4EBP1/2/3 binding stretch occupies residues 98 to 102 (WALYS). 127–128 (WE) is a binding site for mRNA. Residues 157 to 164 (ETLLCLIG) are EIF4EBP1/2/3 binding. MRNA is bound by residues 182-187 (RTKGDK) and 230-232 (TKS).

It belongs to the eukaryotic initiation factor 4E family. As to quaternary structure, eIF4F is a multi-subunit complex, the composition of which varies with external and internal environmental conditions. It is composed of at least EIF4A, EIF4E and EIF4G.

In terms of biological role, recognizes and binds the 7-methylguanosine-containing mRNA cap during an early step in the initiation of protein synthesis and facilitates ribosome binding by inducing the unwinding of the mRNAs secondary structure. The sequence is that of Eukaryotic translation initiation factor 4E type 1B (EIF4E1B) from Homo sapiens (Human).